We begin with the raw amino-acid sequence, 366 residues long: Alanine racemase (366 aa).

Residue Lys-40 is the Proton acceptor; specific for D-alanine of the active site. Lys-40 carries the post-translational modification N6-(pyridoxal phosphate)lysine. Arg-136 is a substrate binding site. Tyr-263 acts as the Proton acceptor; specific for L-alanine in catalysis. Residue Met-310 coordinates substrate.

This sequence belongs to the alanine racemase family. The cofactor is pyridoxal 5'-phosphate.

It catalyses the reaction L-alanine = D-alanine. The protein operates within amino-acid biosynthesis; D-alanine biosynthesis; D-alanine from L-alanine: step 1/1. Its function is as follows. Catalyzes the interconversion of L-alanine and D-alanine. May also act on other amino acids. This is Alanine racemase (alr) from Streptococcus pyogenes serotype M12 (strain MGAS2096).